A 295-amino-acid chain; its full sequence is Defective in cullin neddylation protein 1 (295 aa).

A UBA-like domain is found at 8–45 (QKTKLRQFVQWTQVTEAVSLNFLAKANWNIEYAMTLYF). The DCUN1 domain maps to 60-272 (VDRSNIERLF…LIDQFVDYCR (213 aa)).

In terms of assembly, interacts with the cullin cul-3. Interacts with ubiquitin via its UBA-like domain. Interacts with ned-8/nedd8.

Its subcellular location is the nucleus. In terms of biological role, required for neddylation of cullin components of SCF-type E3 ubiquitin ligase complexes. Neddylation of cullins play an essential role in the regulation of SCF-type complexes activity. Does not act by preventing deneddylation, but rather facilitates neddylation, possibly by acting with rbx-1 to recruit the Nedd8-charged E2 enzyme to the cullin component of SCF-type complexes. The polypeptide is Defective in cullin neddylation protein 1 (dcn-1) (Caenorhabditis elegans).